The chain runs to 84 residues: Large ribosomal subunit protein bL31B (84 aa).

It belongs to the bacterial ribosomal protein bL31 family. Type B subfamily. Part of the 50S ribosomal subunit.

Functionally, binds the 23S rRNA. The chain is Large ribosomal subunit protein bL31B from Rhodococcus jostii (strain RHA1).